A 98-amino-acid polypeptide reads, in one-letter code: UPF0213 protein BPUM_0019 (98 aa).

Residues 4 to 79 (HNHYFYVLKC…KTWTRKKKDL (76 aa)) enclose the GIY-YIG domain.

Belongs to the UPF0213 family.

This chain is UPF0213 protein BPUM_0019, found in Bacillus pumilus (strain SAFR-032).